Here is a 233-residue protein sequence, read N- to C-terminus: Large ribosomal subunit protein uL1 (233 aa).

The protein belongs to the universal ribosomal protein uL1 family. Part of the 50S ribosomal subunit.

Binds directly to 23S rRNA. The L1 stalk is quite mobile in the ribosome, and is involved in E site tRNA release. Its function is as follows. Protein L1 is also a translational repressor protein, it controls the translation of the L11 operon by binding to its mRNA. The chain is Large ribosomal subunit protein uL1 from Campylobacter concisus (strain 13826).